The following is a 309-amino-acid chain: Homoserine kinase (309 aa).

91-101 (PIGSGLGSSAC) serves as a coordination point for ATP.

Belongs to the GHMP kinase family. Homoserine kinase subfamily.

It is found in the cytoplasm. It catalyses the reaction L-homoserine + ATP = O-phospho-L-homoserine + ADP + H(+). Its pathway is amino-acid biosynthesis; L-threonine biosynthesis; L-threonine from L-aspartate: step 4/5. Catalyzes the ATP-dependent phosphorylation of L-homoserine to L-homoserine phosphate. The polypeptide is Homoserine kinase (Pectobacterium atrosepticum (strain SCRI 1043 / ATCC BAA-672) (Erwinia carotovora subsp. atroseptica)).